The sequence spans 120 residues: Large ribosomal subunit protein bL17 (120 aa).

It belongs to the bacterial ribosomal protein bL17 family. Part of the 50S ribosomal subunit. Contacts protein L32.

The chain is Large ribosomal subunit protein bL17 from Anoxybacillus flavithermus (strain DSM 21510 / WK1).